The primary structure comprises 565 residues: MTSTTPKSPAAFTRHRDGEIRAARGTQLTAKSWMTEAPLRMLMNNLDPQVAENPTELVVYGGIGRAARNWECYDKIVESLTNLNDDETLLVQSGKPVGVFKTHSNAPRVLIANSNLVPHWATWEHFNELDAKGLAMYGQMTAGSWINIGSQGIVQGTYETFVEAGRQHYNGSLKGKWVLTAGLGGMGGAQPLAATLAGACSLNIECQQSRIDFRLATRYVDEQALDLDDALVRIAKYTAEGKAISIALCGNAAELLPEMVRRGVRPDMVTDQTSAHDPLNGYLPKGWTWEQYRDRAVTDPAAVVKAAKASMGEHVEAMLAFQKAGIPTFDYGNNIRQMAKEVGVENAFDFPGFVPAYIRPLFCRGVGPFRWVALSGDAEDIYKTDAKVKELIADDAHLHNWLDMARERISFQGLPARICWVGLGQRAKLGLAFNEMVRSGELKAPIVIGRDHLDSGSVSSPNRETESMKDGSDAVSDWPLLNALLNTASGATWVSLHHGGGVGMGFSQHSGMVIVCDGTDEAAERIARVLHNDPATGVMRHADAGYDIAIDCANEQGLNLPMING.

NAD(+) is bound by residues 61-62 (GG), glutamine 139, 185-187 (GMG), glutamate 205, arginine 210, 251-252 (NA), 272-276 (QTSAH), 282-283 (YL), and tyrosine 331. The active site involves cysteine 419. Residues 453-472 (LDSGSVSSPNRETESMKDGS) form a disordered region. A compositionally biased stretch (basic and acidic residues) spans 463-472 (RETESMKDGS). Glycine 501 is an NAD(+) binding site.

The protein belongs to the urocanase family. Requires NAD(+) as cofactor.

It localises to the cytoplasm. It carries out the reaction 4-imidazolone-5-propanoate = trans-urocanate + H2O. It functions in the pathway amino-acid degradation; L-histidine degradation into L-glutamate; N-formimidoyl-L-glutamate from L-histidine: step 2/3. Catalyzes the conversion of urocanate to 4-imidazolone-5-propionate. The protein is Urocanate hydratase of Pseudomonas syringae.